We begin with the raw amino-acid sequence, 48 residues long: Large ribosomal subunit protein eL40 (48 aa).

The protein belongs to the eukaryotic ribosomal protein eL40 family.

The protein is Large ribosomal subunit protein eL40 of Methanobrevibacter smithii (strain ATCC 35061 / DSM 861 / OCM 144 / PS).